A 368-amino-acid polypeptide reads, in one-letter code: 1-aminocyclopropane-1-carboxylate oxidase (368 aa).

A Fe2OG dioxygenase domain is found at 177-307 (PFILMGLLHY…RFSIPFFLDP (131 aa)). Positions 191-226 (HQEQEEEQEDDESNNGGKKSPNPDESKKPEVEKFGT) are disordered. Over residues 194-203 (QEEEQEDDES) the composition is skewed to acidic residues. Residues 211–223 (PNPDESKKPEVEK) show a composition bias toward basic and acidic residues. H229, D231, and H287 together coordinate Fe cation. R298 provides a ligand contact to 2-oxoglutarate.

It belongs to the iron/ascorbate-dependent oxidoreductase family. Requires Fe(2+) as cofactor.

The enzyme catalyses 1-aminocyclopropane-1-carboxylate + L-ascorbate + O2 = ethene + L-dehydroascorbate + hydrogen cyanide + CO2 + 2 H2O. It participates in alkene biosynthesis; ethylene biosynthesis via S-adenosyl-L-methionine; ethylene from S-adenosyl-L-methionine: step 2/2. Its function is as follows. Involved in ethylene biosynthesis. Overexpression induces overproduction of ethylene. The protein is 1-aminocyclopropane-1-carboxylate oxidase (aco) of Dictyostelium discoideum (Social amoeba).